The chain runs to 197 residues: Phosphoheptose isomerase (197 aa).

The region spanning 36–197 (MVNALLNEGK…IDSQLFGSEE (162 aa)) is the SIS domain. 51-53 (NGG) serves as a coordination point for substrate. 2 residues coordinate Zn(2+): His-60 and Glu-64. Residues Glu-64, 93–94 (ND), 119–121 (STS), Ser-124, and Gln-174 each bind substrate. 2 residues coordinate Zn(2+): Gln-174 and His-182.

The protein belongs to the SIS family. GmhA subfamily. As to quaternary structure, homotetramer. Zn(2+) is required as a cofactor.

It is found in the cytoplasm. The enzyme catalyses 2 D-sedoheptulose 7-phosphate = D-glycero-alpha-D-manno-heptose 7-phosphate + D-glycero-beta-D-manno-heptose 7-phosphate. It functions in the pathway carbohydrate biosynthesis; D-glycero-D-manno-heptose 7-phosphate biosynthesis; D-glycero-alpha-D-manno-heptose 7-phosphate and D-glycero-beta-D-manno-heptose 7-phosphate from sedoheptulose 7-phosphate: step 1/1. Its function is as follows. Catalyzes the isomerization of sedoheptulose 7-phosphate in D-glycero-D-manno-heptose 7-phosphate. The protein is Phosphoheptose isomerase of Pseudomonas fluorescens (strain Pf0-1).